We begin with the raw amino-acid sequence, 995 residues long: tRNA wybutosine-synthesizing protein 2/3/4 (995 aa).

Residues 1–212 (MDFEKRKAAT…GFSVALASNG (212 aa)) form a tRNA wybutosine-synthesizing protein 3 homolog region. Kelch repeat units follow at residues 284-335 (EVIV…MVGD), 336-386 (FMFV…SVGT), 387-436 (KVYI…AYGS), 437-486 (QSFM…VYKH), and 488-535 (IGII…SILG). Residues 661-995 (ERSEENNLTK…RHLVADVRCR (335 aa)) are tRNA wybutosine-synthesizing protein 2 homolog. S-adenosyl-L-methionine contacts are provided by residues lysine 828 and 896–897 (DN).

In the C-terminal section; belongs to the class I-like SAM-binding methyltransferase superfamily. TRM5/TYW2 family. The protein in the N-terminal section; belongs to the TYW3 family.

It carries out the reaction 4-demethyl-7-[(3S)-3-amino-3-carboxypropyl]wyosine(37) in tRNA(Phe) + S-adenosyl-L-methionine = 7-[(3S)-3-amino-3-carboxypropyl]wyosine(37) in tRNA(Phe) + S-adenosyl-L-homocysteine + H(+). The catalysed reaction is 4-demethylwyosine(37) in tRNA(Phe) + S-adenosyl-L-methionine = 4-demethyl-7-[(3S)-3-amino-3-carboxypropyl]wyosine(37) in tRNA(Phe) + S-methyl-5'-thioadenosine + H(+). Its pathway is tRNA modification; wybutosine-tRNA(Phe) biosynthesis. Its function is as follows. S-adenosyl-L-methionine-dependent transferase that acts as a component of the wybutosine biosynthesis pathway. Wybutosine is a hyper modified guanosine with a tricyclic base found at the 3'-position adjacent to the anticodon of eukaryotic phenylalanine tRNA. This chain is tRNA wybutosine-synthesizing protein 2/3/4, found in Arabidopsis thaliana (Mouse-ear cress).